A 76-amino-acid chain; its full sequence is UPF0154 protein LCA_1273 (76 aa).

Residues 3–23 (IGIGVLIFVIGALLGAVAGFF) form a helical membrane-spanning segment. Residues 55 to 76 (PSEKKLNQMMSSMKAQQKRSKK) are disordered.

The protein belongs to the UPF0154 family.

It is found in the cell membrane. This chain is UPF0154 protein LCA_1273, found in Latilactobacillus sakei subsp. sakei (strain 23K) (Lactobacillus sakei subsp. sakei).